Consider the following 199-residue polypeptide: 5'-deoxynucleotidase HDDC2 (199 aa).

At alanine 2 the chain carries N-acetylalanine. At serine 5 the chain carries Phosphoserine. Residues 41 to 143 (VSDHMYRMAV…VKQLDQCEMI (103 aa)) form the HD domain. Histidine 44, histidine 72, aspartate 73, glutamate 76, aspartate 81, isoleucine 82, and aspartate 138 together coordinate a divalent metal cation. The residue at position 199 (serine 199) is a Phosphoserine.

The protein belongs to the HDDC2 family. Homodimer. Requires Mn(2+) as cofactor. Co(2+) is required as a cofactor. Mg(2+) serves as cofactor.

It catalyses the reaction a 2'-deoxyribonucleoside 5'-phosphate + H2O = a 2'-deoxyribonucleoside + phosphate. Catalyzes the dephosphorylation of the nucleoside 5'-monophosphates deoxyadenosine monophosphate (dAMP), deoxycytidine monophosphate (dCMP), deoxyguanosine monophosphate (dGMP) and deoxythymidine monophosphate (dTMP). In Mus musculus (Mouse), this protein is 5'-deoxynucleotidase HDDC2 (Hddc2).